The sequence spans 543 residues: Chaperonin GroEL 1 (543 aa).

ATP is bound by residues 29–32 (TLGP), 86–90 (DGTTT), Gly413, 479–481 (NAA), and Asp495. The segment at 524–543 (PEPKDAAPAGVGGGGGDFDY) is disordered. Positions 533 to 543 (GVGGGGGDFDY) are enriched in gly residues.

This sequence belongs to the chaperonin (HSP60) family. As to quaternary structure, forms a cylinder of 14 subunits composed of two heptameric rings stacked back-to-back. Interacts with the co-chaperonin GroES.

The protein localises to the cytoplasm. It carries out the reaction ATP + H2O + a folded polypeptide = ADP + phosphate + an unfolded polypeptide.. In terms of biological role, together with its co-chaperonin GroES, plays an essential role in assisting protein folding. The GroEL-GroES system forms a nano-cage that allows encapsulation of the non-native substrate proteins and provides a physical environment optimized to promote and accelerate protein folding. This is Chaperonin GroEL 1 from Anabaena sp. (strain L31).